The following is a 397-amino-acid chain: Acetate kinase (397 aa).

Asn7 lines the Mg(2+) pocket. Lys14 is an ATP binding site. A substrate-binding site is contributed by Arg91. The active-site Proton donor/acceptor is the Asp147. Residues His207–Gly211, Asp282–Arg284, and Gly330–Asn334 contribute to the ATP site. Glu383 serves as a coordination point for Mg(2+).

The protein belongs to the acetokinase family. As to quaternary structure, homodimer. Mg(2+) serves as cofactor. Mn(2+) is required as a cofactor.

The protein resides in the cytoplasm. The catalysed reaction is acetate + ATP = acetyl phosphate + ADP. The protein operates within metabolic intermediate biosynthesis; acetyl-CoA biosynthesis; acetyl-CoA from acetate: step 1/2. Catalyzes the formation of acetyl phosphate from acetate and ATP. Can also catalyze the reverse reaction. The sequence is that of Acetate kinase from Moorella thermoacetica (strain ATCC 39073 / JCM 9320).